Here is a 533-residue protein sequence, read N- to C-terminus: Tyrosine decarboxylase (533 aa).

The disordered stretch occupies residues 1–22 (MAPPSHCHTINGGAPRNGAIPE). 2 residues coordinate pyridoxal 5'-phosphate: T281 and N336. Position 339 is an N6-(pyridoxal phosphate)lysine (K339).

This sequence belongs to the group II decarboxylase family. Requires pyridoxal 5'-phosphate as cofactor.

The enzyme catalyses L-tyrosine + H(+) = tyramine + CO2. Catalyzes the decarboxylation of L-tyrosine to tyramine, which can be converted to the hydroxycinnamic acid amides feruloyltyramine and 4-coumaroyltyramine. Possesses low tryptophan decarboxylase activity. The polypeptide is Tyrosine decarboxylase (Oryza sativa subsp. japonica (Rice)).